Consider the following 82-residue polypeptide: Penaeidin-3g (82 aa).

A signal peptide spans 1–19; that stretch reads MRLVVCLVFLASFALVCQG. Gln20 bears the Pyrrolidone carboxylic acid mark. 3 disulfide bridges follow: Cys51/Cys66, Cys55/Cys73, and Cys67/Cys74. Ser81 carries the serine amide modification.

Belongs to the penaeidin family.

The protein resides in the cytoplasmic granule. In terms of biological role, antibacterial and antifungal activity. Presents chitin-binding activity. The protein is Penaeidin-3g of Penaeus vannamei (Whiteleg shrimp).